Reading from the N-terminus, the 757-residue chain is Alcohol dehydrogenase (quinone), dehydrogenase subunit (757 aa).

The first 34 residues, 1–34 (MTSGLLTPIKVTKKRLLSCAAALAFSAAVPVAFA), serve as a signal peptide directing secretion. Glutamine 35 is subject to Pyrrolidone carboxylic acid. Glutamate 95 serves as a coordination point for pyrroloquinoline quinone. Residues cysteine 141 and cysteine 142 are joined by a disulfide bond. Residue arginine 147 participates in pyrroloquinoline quinone binding. A Ca(2+)-binding site is contributed by glutamate 215. Threonine 277 contacts pyrroloquinoline quinone. Positions 297 and 342 each coordinate Ca(2+). Aspartate 342 functions as the Proton acceptor in the catalytic mechanism. The pyrroloquinoline quinone site is built by lysine 369 and isoleucine 588. The 80-residue stretch at 640–719 (ARQKDGYFMY…DIRNFIVKRA (80 aa)) folds into the Cytochrome c domain. Positions 653, 656, 657, and 696 each coordinate heme c. Residues 726 to 757 (EVKARENSTGVPNDQFLNVPQSTADVPTADHP) are disordered. Residues 732 to 750 (NSTGVPNDQFLNVPQSTAD) are compositionally biased toward polar residues.

It belongs to the bacterial PQQ dehydrogenase family. As to quaternary structure, the alcohol dehydrogenase multicomponent enzyme system is composed of a dehydrogenase subunit I (AdhA), a cytochrome c subunit II (AdhB) and a subunit III (AdhS). Pyrroloquinoline quinone serves as cofactor. Requires Ca(2+) as cofactor. The cofactor is heme c.

Its subcellular location is the cell membrane. The catalysed reaction is ethanol + a ubiquinone = a ubiquinol + acetaldehyde. Its activity is regulated as follows. 2,6-dichloro-4-dicyanovinylphenol (PC16) and antimycin A inhibit ubiquinol oxidation activity more selectively than the ubiquinone reductase activity. In terms of biological role, dehydrogenase component of the alcohol dehydrogenase multicomponent enzyme system which is involved in the production of acetic acid and in the ethanol oxidase respiratory chain. Quinohemoprotein alcohol dehydrogenase (ADH) catalyzes the oxidation of ethanol to acetaldehyde by transferring electrons to the ubiquinone embedded in the membrane phospholipids. The electrons transfer from ethanol to membranous ubiquinone occurs from pyrroloquinoline quinone (PQQ) to one heme c in subunit I (AdhA), and finally to two heme c in subunit II (AdhB). Besides ubiquinone reduction, ADH also has a ubiquinol (QH2) oxidation reaction which mediates electron transfer from ubiquinol to the non-energy generating bypass oxidase system. The electrons transfer occurs from ubiquinol (QH2) to the additional heme c within subunit II (AdhB). Also able to use quinone analogs such as 2,3-dimethoxy-5-methyl-6-n-decyl-1,4-benzoquinone (DB) and 2,3-dimethoxy-5-methyl-6-n-pentyl-1,4-benzoquinone (PB). The protein is Alcohol dehydrogenase (quinone), dehydrogenase subunit of Gluconobacter oxydans (strain 621H) (Gluconobacter suboxydans).